The chain runs to 2299 residues: Acetyl-CoA carboxylase dmxL1 (2299 aa).

The segment covering 21–39 has biased composition (low complexity); that stretch reads TSIPASVPASAPPSSSAPH. Residues 21-41 form a disordered region; the sequence is TSIPASVPASAPPSSSAPHAA. Residues 75–583 form the Biotin carboxylation domain; sequence VITNVLIANN…TTGWLDELIT (509 aa). An ATP-grasp 1 domain is found at 227–424; that stretch reads QVAIDADGIV…LPAAQLQIAM (198 aa). ATP is bound at residue 258–315; sequence AKEIGFPVMIKASEGGGGKGIRKCEQEEGFEALYNAASSEIPGSPIFIMKLAGNARHL. Positions 381, 395, and 397 each coordinate Mg(2+). Residues Glu381, Glu395, and Asn397 each contribute to the Mn(2+) site. Residues 710–784 enclose the Biotinyl-binding domain; the sequence is LEQENDPTQL…EPGDVLGILT (75 aa). Lys751 carries the N6-biotinyllysine modification. Residues 1159–1208 are disordered; it reads DMEMSSQLSTPSTPATPPTPPYENGKQSKGVGSISDMSNLIENPDKEPTR. The 349-residue stretch at 1539 to 1887 folds into the CoA carboxyltransferase N-terminal domain; it reads PTKALEWLQP…KKNTLVPIGP (349 aa). The CoA carboxyltransferase C-terminal domain maps to 1891–2205; that stretch reads PWDRDIVCSP…EEHILKRIAT (315 aa).

It depends on biotin as a cofactor. Mg(2+) is required as a cofactor. The cofactor is Mn(2+).

The catalysed reaction is hydrogencarbonate + acetyl-CoA + ATP = malonyl-CoA + ADP + phosphate + H(+). It carries out the reaction N(6)-biotinyl-L-lysyl-[protein] + hydrogencarbonate + ATP = N(6)-carboxybiotinyl-L-lysyl-[protein] + ADP + phosphate + H(+). The protein operates within secondary metabolite biosynthesis. It functions in the pathway lipid metabolism; malonyl-CoA biosynthesis; malonyl-CoA from acetyl-CoA: step 1/1. In terms of biological role, acetyl-CoA carboxylase; part of the gene cluster that mediates the biosynthesis of the dimeric xanthones cryptosporioptides. The pathway begins with the synthesis of atrochrysone thioester by the polyketide synthase dmx-nrPKS. The atrochrysone carboxyl ACP thioesterase dmxR1 then breaks the thioester bond and releases the atrochrysone carboxylic acid from dmx-nrPKS. Atrochrysone carboxylic acid is decarboxylated by the decarboxylase dmxR15, and oxidized by the anthrone oxygenase dmxR16 to yield emodin. Emodin is then reduced to emodin hydroquinone by the oxidoreductase dmxR7. A-ring reduction by the short chain dehydrogenase dmxR18, dehydration by the scytalone dehydratase-like protein dmxR17 and probable spontaneous re-oxidation, results in overall deoxygenation to chrysophanol. Baeyer-Villiger oxidation by the Baeyer-Villiger monooxygenase (BVMO) dmxR6 then yields monodictylactone in equilibrium with monodictyphenone. In the case of the cryptosporioptides biosynthesis, monodictylactone is reduced at C-12 to an alcohol (by the short chain dehydrogenases dmxR12 or dmxR8) and hydroxylated at C-5 by dmxR9, yielding the electron-rich aromatic which could eliminate H(2)O to form the ortho-quinonemethide, followed by tautomerisation to paraquinone and complete the formal reduction to produce the 10-methylgroup. Conjugate addition of C-4a-OH to the resulting paraquinone by the monooxygenase dmxR10 then gives cyclohexadienone, which is then reduced at C-5 by the short chain dehydrogenase dmxR3 to give the dihydroxanthone. The 6,7-epoxide in the cryptosporioptides could be introduced by the cytochrome P450 monooxygenase dmxL3. The highly reducing PKS dmxL2 manufactures butyrate, which is further carboxylated by dmxL1 to form ethylmalonate. It is not yet clear whether the carboxylation occurs while the butyrate is attached to the ACP of dmxL2, but this unusual fungal metabolite could then be esterified to O-5 by the O-acetyltransferase dmxR13. Finally, dimerization performed by dmxR5 gives the observed dimers cryptosporioptides A, B and C as the final products of the pathway. This Cryptosporiopsis sp. (strain 8999) protein is Acetyl-CoA carboxylase dmxL1.